The sequence spans 92 residues: Small ribosomal subunit protein uS19 (92 aa).

The protein belongs to the universal ribosomal protein uS19 family.

In terms of biological role, protein S19 forms a complex with S13 that binds strongly to the 16S ribosomal RNA. This is Small ribosomal subunit protein uS19 from Bartonella bacilliformis (strain ATCC 35685 / KC583 / Herrer 020/F12,63).